A 306-amino-acid chain; its full sequence is Mitochondrial glycine transporter (306 aa).

Solcar repeat units lie at residues 25–114 (QPVI…LKQY), 121–205 (PTAL…TKNV), and 217–301 (LVPV…MMAK). A run of 6 helical transmembrane segments spans residues 31–56 (FLCG…TRLQ), 89–115 (GMSP…KQYF), 127–152 (VILG…TRYE), 180–203 (GLTA…SQTK), 221–247 (VNFS…KTHM), and 276–294 (GSVP…AWTV).

Belongs to the mitochondrial carrier (TC 2.A.29) family. SLC25A38 subfamily.

The protein resides in the mitochondrion inner membrane. The catalysed reaction is glycine(in) = glycine(out). Mitochondrial glycine transporter that imports glycine into the mitochondrial matrix. Plays an important role in providing glycine for the first enzymatic step in heme biosynthesis, the condensation of glycine with succinyl-CoA to produce 5-aminolevulinate (ALA) in the mitochondrial matrix. Required during erythropoiesis. Functionally, plays a role as pro-apoptotic protein that induces caspase-dependent apoptosis. This is Mitochondrial glycine transporter from Ovis aries (Sheep).